The following is a 1020-amino-acid chain: Calcium-transporting ATPase sarcoplasmic/endoplasmic reticulum type (1020 aa).

Residues 1-48 (MEDGHSKTVEQSLNFFGTDPERGLTLDQIKANQKKYGPNELPTEEGKS) lie on the Cytoplasmic side of the membrane. Residues 49–69 (IWQLVLEQFDDLLVKILLLAA) form a helical membrane-spanning segment. Over 70 to 89 (IISFVLALFEEHEETFTAFV) the chain is Lumenal. Residues 90–110 (EPLVILLILIANAVVGVWQER) form a helical membrane-spanning segment. Over 111–253 (NAESAIEALK…EIKTPLQQKL (143 aa)) the chain is Cytoplasmic. Ser240 carries the post-translational modification Phosphoserine. The chain crosses the membrane as a helical span at residues 254 to 273 (DEFGEQLSKVISVICVAVWA). Residues 274 to 295 (INIGHFNDPAHGGSWIKGAIYY) are Lumenal-facing. Residues 296–313 (FKIAVALAVAAIPEGLPA) traverse the membrane as a helical segment. Positions 304, 305, 307, and 309 each coordinate Ca(2+). Residues 314–757 (VITTCLALGT…EEGRAIYNNM (444 aa)) are Cytoplasmic-facing. Asp351 acts as the 4-aspartylphosphate intermediate in catalysis. Positions 703 and 707 each coordinate Mg(2+). A helical transmembrane segment spans residues 758 to 777 (KQFIRYLISSNIGEVVSIFL). Residues Asn768 and Glu771 each coordinate Ca(2+). Residues 778-787 (TAALGLPEAL) are Lumenal-facing. Residues 788–808 (IPVQLLWVNLVTDGLPATALG) form a helical membrane-spanning segment. Ca(2+) is bound by residues Asn796, Thr799, and Asp800. Over 809–828 (FNPPDLDIMEKPPRKADEGL) the chain is Cytoplasmic. A helical membrane pass occupies residues 829–851 (ISGWLFFRYMAIGFYVGAATVGA). Residues 852 to 897 (AAWWFVFSDEGPKLSYWQLTHHLSCLGGGDEFKGVDCKIFSDPHAM) are Lumenal-facing. Residues 898-917 (TMALSVLVTIEMLNAMNSLS) form a helical membrane-spanning segment. Residue Glu908 participates in Ca(2+) binding. Topologically, residues 918–930 (ENQSLITMPPWCN) are cytoplasmic. The helical transmembrane segment at 931–949 (LWLIGSMALSFTLHFVILY) threads the bilayer. The Lumenal portion of the chain corresponds to 950–964 (VDVLSTVFQVTPLSA). Residues 965–985 (EEWITVMKFSIPVVLLDETLK) form a helical membrane-spanning segment. The Cytoplasmic segment spans residues 986–1020 (FVARKIADGESPIYKMHGIVLMWAVFFGLLYAMML).

This sequence belongs to the cation transport ATPase (P-type) (TC 3.A.3) family. In terms of assembly, interacts with SclA and SclB.

The protein localises to the endoplasmic reticulum membrane. The protein resides in the sarcoplasmic reticulum membrane. The enzyme catalyses Ca(2+)(in) + ATP + H2O = Ca(2+)(out) + ADP + phosphate + H(+). In terms of biological role, this magnesium-dependent enzyme catalyzes the hydrolysis of ATP coupled with the transport of calcium. The chain is Calcium-transporting ATPase sarcoplasmic/endoplasmic reticulum type from Drosophila melanogaster (Fruit fly).